The sequence spans 55 residues: Methylmalonyl-CoA decarboxylase subunit epsilon (55 aa).

As to quaternary structure, the methylmalonyl-CoA decarboxylase is composed of five subunits: the carboxyltransferase alpha subunit (MmdA), the tunnel beta subunit (MmdB), the biotin-containing gamma subunit (MmdC), and the delta (MmdD) and epsilon (MmdE) subunits.

The protein localises to the cell membrane. It catalyses the reaction (S)-methylmalonyl-CoA + Na(+)(in) + H(+)(out) = propanoyl-CoA + Na(+)(out) + CO2. With respect to regulation, completely inhibited by avidin. Its function is as follows. Subunit of the sodium ion pump methylmalonyl-CoA decarboxylase, which converts the chemical energy of a decarboxylation reaction into an electrochemical gradient of Na(+) ions across the cytoplasmic membrane, thereby creating a sodium ion motive force that is used for ATP synthesis. The epsilon subunit seems not important for the catalysis of either decarboxylation or Na(+) transport, but it improves binding of the alpha subunit and plays an important role in stabilizing the methylmalonyl-CoA-decarboxylase enzyme complex. Can also convert malonyl-CoA into acetyl-CoA. In Veillonella parvula (Staphylococcus parvulus), this protein is Methylmalonyl-CoA decarboxylase subunit epsilon.